The primary structure comprises 349 residues: Protein RecA (349 aa).

Position 69 to 76 (G69 to T76) interacts with ATP.

The protein belongs to the RecA family.

It is found in the cytoplasm. Functionally, can catalyze the hydrolysis of ATP in the presence of single-stranded DNA, the ATP-dependent uptake of single-stranded DNA by duplex DNA, and the ATP-dependent hybridization of homologous single-stranded DNAs. It interacts with LexA causing its activation and leading to its autocatalytic cleavage. The protein is Protein RecA of Rippkaea orientalis (strain PCC 8801 / RF-1) (Cyanothece sp. (strain PCC 8801)).